A 242-amino-acid polypeptide reads, in one-letter code: Aliphatic sulfonates import ATP-binding protein SsuB 1 (242 aa).

Residues 11–227 (VAVRRLSRAF…RPSHPDFEDL (217 aa)) enclose the ABC transporter domain. 43-50 (GESGSGKT) is a binding site for ATP.

Belongs to the ABC transporter superfamily. Aliphatic sulfonates importer (TC 3.A.1.17.2) family. In terms of assembly, the complex is composed of two ATP-binding proteins (SsuB), two transmembrane proteins (SsuC) and a solute-binding protein (SsuA).

The protein localises to the cell inner membrane. It carries out the reaction ATP + H2O + aliphatic sulfonate-[sulfonate-binding protein]Side 1 = ADP + phosphate + aliphatic sulfonateSide 2 + [sulfonate-binding protein]Side 1.. Part of the ABC transporter complex SsuABC involved in aliphatic sulfonates import. Responsible for energy coupling to the transport system. The polypeptide is Aliphatic sulfonates import ATP-binding protein SsuB 1 (Paracoccus denitrificans (strain Pd 1222)).